We begin with the raw amino-acid sequence, 273 residues long: Dermonecrotic toxin LapSicTox-alphaIB1aii (273 aa).

His5 is a catalytic residue. Residues Glu25 and Asp27 each coordinate Mg(2+). The Nucleophile role is filled by His41. 2 disulfides stabilise this stretch: Cys45–Cys51 and Cys47–Cys190. Mg(2+) is bound at residue Asp85. N-linked (GlcNAc...) asparagine glycosylation occurs at Asn250.

It belongs to the arthropod phospholipase D family. Class II subfamily. Mg(2+) is required as a cofactor. As to expression, expressed by the venom gland.

The protein localises to the secreted. It catalyses the reaction an N-(acyl)-sphingosylphosphocholine = an N-(acyl)-sphingosyl-1,3-cyclic phosphate + choline. The enzyme catalyses an N-(acyl)-sphingosylphosphoethanolamine = an N-(acyl)-sphingosyl-1,3-cyclic phosphate + ethanolamine. It carries out the reaction a 1-acyl-sn-glycero-3-phosphocholine = a 1-acyl-sn-glycero-2,3-cyclic phosphate + choline. The catalysed reaction is a 1-acyl-sn-glycero-3-phosphoethanolamine = a 1-acyl-sn-glycero-2,3-cyclic phosphate + ethanolamine. In terms of biological role, dermonecrotic toxins cleave the phosphodiester linkage between the phosphate and headgroup of certain phospholipids (sphingolipid and lysolipid substrates), forming an alcohol (often choline) and a cyclic phosphate. This toxin acts on sphingomyelin (SM). It may also act on ceramide phosphoethanolamine (CPE), lysophosphatidylcholine (LPC) and lysophosphatidylethanolamine (LPE), but not on lysophosphatidylserine (LPS), and lysophosphatidylglycerol (LPG). It acts by transphosphatidylation, releasing exclusively cyclic phosphate products as second products. Induces dermonecrosis, hemolysis, increased vascular permeability, edema, inflammatory response, and platelet aggregation. In Loxosceles apachea (Apache recluse spider), this protein is Dermonecrotic toxin LapSicTox-alphaIB1aii.